A 658-amino-acid polypeptide reads, in one-letter code: Gametogenetin (658 aa).

Disordered regions lie at residues 1–268 (MGNV…ASGG) and 285–584 (KQGP…SNKG). A compositionally biased stretch (basic and acidic residues) spans 14-30 (SRKEQASDRASDSRRTP). The span at 54–83 (PGSSGPPGLLIPPESQASSSTLPLTLELPS) shows a compositional bias: low complexity. The interaction with GGNBP1 stretch occupies residues 127–491 (RGLLEASHRG…APTPPSTLSP (365 aa)). Over residues 163–188 (PAPPPTPLEPRKQLPPAPSTCDPQPP) the composition is skewed to pro residues. Polar residues predominate over residues 194–204 (LASSATSPTES). A compositionally biased stretch (low complexity) spans 252 to 264 (SSSGPLAAKASLG). At S384 the chain carries Phosphoserine. The segment covering 398 to 409 (PRRPTPALLAPP) has biased composition (low complexity). Residues 423 to 460 (RPVPPSPQQIPPLPPPPPTPPATPPPAPPPTPQPPALP) are compositionally biased toward pro residues. Low complexity predominate over residues 489–516 (LSPTAAAEQAPAPTPAPVTSQVPATTTA). An interactions with ZNF403/GGNBP2 and OAZ3 region spans residues 496 to 658 (EQAPAPTPAP…HYDLQATHST (163 aa)). The span at 527–536 (IRTRRNKGPR) shows a compositional bias: basic residues.

In terms of assembly, interacts with FANCL, GGNBP1 and ZNF403/GGNBP2.

Functionally, may be involved in spermatogenesis. The polypeptide is Gametogenetin (Ggn) (Rattus norvegicus (Rat)).